Reading from the N-terminus, the 346-residue chain is Biotin synthase (346 aa).

In terms of domain architecture, Radical SAM core spans 38 to 256; that stretch reads RQVQVSTLLS…IAVARIMMPT (219 aa). [4Fe-4S] cluster is bound by residues C53, C57, and C60. The [2Fe-2S] cluster site is built by C97, C128, C188, and R260.

It belongs to the radical SAM superfamily. Biotin synthase family. In terms of assembly, homodimer. [4Fe-4S] cluster serves as cofactor. Requires [2Fe-2S] cluster as cofactor.

The enzyme catalyses (4R,5S)-dethiobiotin + (sulfur carrier)-SH + 2 reduced [2Fe-2S]-[ferredoxin] + 2 S-adenosyl-L-methionine = (sulfur carrier)-H + biotin + 2 5'-deoxyadenosine + 2 L-methionine + 2 oxidized [2Fe-2S]-[ferredoxin]. The protein operates within cofactor biosynthesis; biotin biosynthesis; biotin from 7,8-diaminononanoate: step 2/2. Its function is as follows. Catalyzes the conversion of dethiobiotin (DTB) to biotin by the insertion of a sulfur atom into dethiobiotin via a radical-based mechanism. The chain is Biotin synthase from Escherichia coli O6:K15:H31 (strain 536 / UPEC).